The sequence spans 133 residues: uncharacterized protein (133 aa).

The helical transmembrane segment at 91 to 113 (LFATALISCIPSSFSALSFLATL) threads the bilayer.

The protein localises to the membrane. This is an uncharacterized protein from Saccharomyces cerevisiae (strain ATCC 204508 / S288c) (Baker's yeast).